We begin with the raw amino-acid sequence, 266 residues long: Undecaprenyl-diphosphatase (266 aa).

Transmembrane regions (helical) follow at residues 8–28 (VLAL…AHLI), 39–59 (QGLA…VIYF), 87–107 (WAVG…HDII), 113–133 (SAQV…FADV), 188–208 (SFLL…LGLV), 219–239 (MIVL…HYFL), and 246–266 (TMLP…FLFW).

Belongs to the UppP family.

The protein localises to the cell inner membrane. The enzyme catalyses di-trans,octa-cis-undecaprenyl diphosphate + H2O = di-trans,octa-cis-undecaprenyl phosphate + phosphate + H(+). Functionally, catalyzes the dephosphorylation of undecaprenyl diphosphate (UPP). Confers resistance to bacitracin. The protein is Undecaprenyl-diphosphatase of Thioalkalivibrio sulfidiphilus (strain HL-EbGR7).